The primary structure comprises 202 residues: Glycerol-3-phosphate acyltransferase (202 aa).

A run of 6 helical transmembrane segments spans residues 2–22, 54–74, 88–108, 120–140, 141–161, and 162–182; these read MIVI…GYVI, FLVT…PLWL, NGLI…YLGF, VILG…FGIL, YLTK…VIGA, and LLIR…LLII.

This sequence belongs to the PlsY family. As to quaternary structure, probably interacts with PlsX.

Its subcellular location is the cell membrane. It carries out the reaction an acyl phosphate + sn-glycerol 3-phosphate = a 1-acyl-sn-glycero-3-phosphate + phosphate. It functions in the pathway lipid metabolism; phospholipid metabolism. In terms of biological role, catalyzes the transfer of an acyl group from acyl-phosphate (acyl-PO(4)) to glycerol-3-phosphate (G3P) to form lysophosphatidic acid (LPA). This enzyme utilizes acyl-phosphate as fatty acyl donor, but not acyl-CoA or acyl-ACP. This Staphylococcus saprophyticus subsp. saprophyticus (strain ATCC 15305 / DSM 20229 / NCIMB 8711 / NCTC 7292 / S-41) protein is Glycerol-3-phosphate acyltransferase.